The following is a 446-amino-acid chain: tRNA modification GTPase MnmE (446 aa).

3 residues coordinate (6S)-5-formyl-5,6,7,8-tetrahydrofolate: Arg24, Glu81, and Lys120. The TrmE-type G domain occupies 216-368 (GLHAVLIGPP…LHTRLRELAL (153 aa)). Residue Asn226 coordinates K(+). GTP-binding positions include 226-231 (NAGKSS), 245-251 (TDVAGTT), and 270-273 (DTAG). Mg(2+) is bound at residue Ser230. 3 residues coordinate K(+): Thr245, Val247, and Thr250. A Mg(2+)-binding site is contributed by Thr251. Lys446 contacts (6S)-5-formyl-5,6,7,8-tetrahydrofolate.

It belongs to the TRAFAC class TrmE-Era-EngA-EngB-Septin-like GTPase superfamily. TrmE GTPase family. Homodimer. Heterotetramer of two MnmE and two MnmG subunits. K(+) is required as a cofactor.

The protein localises to the cytoplasm. Functionally, exhibits a very high intrinsic GTPase hydrolysis rate. Involved in the addition of a carboxymethylaminomethyl (cmnm) group at the wobble position (U34) of certain tRNAs, forming tRNA-cmnm(5)s(2)U34. This is tRNA modification GTPase MnmE from Xanthomonas campestris pv. campestris (strain B100).